Reading from the N-terminus, the 593-residue chain is V-type sodium ATPase catalytic subunit A (593 aa).

Glycine 232–threonine 239 provides a ligand contact to ATP.

The protein belongs to the ATPase alpha/beta chains family.

The catalysed reaction is 4 Na(+)(in) + ATP + H2O = 4 Na(+)(out) + ADP + phosphate + H(+). Its function is as follows. Involved in ATP-driven sodium extrusion. The sequence is that of V-type sodium ATPase catalytic subunit A (ntpA) from Enterococcus hirae (strain ATCC 9790 / DSM 20160 / JCM 8729 / LMG 6399 / NBRC 3181 / NCIMB 6459 / NCDO 1258 / NCTC 12367 / WDCM 00089 / R).